Here is a 538-residue protein sequence, read N- to C-terminus: Telomerase Cajal body protein 1 (538 aa).

Residues 1-53 (MKTSEERLVVPDSLSSDQAPAPVPQGSPVDENTDSEPVPQPCGGDDRSQVAAD) form a disordered region. Phosphoserine is present on residues serine 27 and serine 87. The tract at residues 92–128 (EQELSENVSLPVEDTNQPELASGEDVEGVSEEPGPVD) is disordered. Positions 113 to 128 (SGEDVEGVSEEPGPVD) are enriched in acidic residues. WD repeat units follow at residues 154 to 194 (AHSE…YSAT), 210 to 255 (EGDT…LRAS), 260 to 301 (NHLD…RDCE), 311 to 352 (GQSG…ALLG), 353 to 393 (GHQG…HLLW), and 399 to 438 (VTTNQRIYFDLDPSGQFLVSGNTNGMVSVWDISGAFGDSS). 2 disordered regions span residues 471 to 491 (QRMFPEPTNSGDEGEPEGDLP) and 509 to 538 (CGGGPDPSSPNDPQDEKGQGRAEGCGDGLI). Threonine 478 is subject to Phosphothreonine. Position 480 is a phosphoserine (serine 480). Residues 529–538 (RAEGCGDGLI) show a composition bias toward gly residues.

Belongs to the TCAB1 family. Component of the telomerase holoenzyme complex composed of one molecule of TERT, one molecule of WRAP53/TCAB1, two molecules of H/ACA ribonucleoprotein complex subunits DKC1, NOP10, NHP2 and GAR1, and a telomerase RNA template component (TERC). The telomerase holoenzyme complex is associated with TEP1, SMG6/EST1A and POT1. Interacts with the chaperonin-containing T-complex (TRiC) complex; which mediates the folding of WRAP53/TCAB1. Interacts with COIL. Interacts with SMN1. Interacts with RNF8. Interacts with histone H2AX. As to expression, preferentially expressed in testis.

It is found in the nucleus. It localises to the cajal body. The protein resides in the chromosome. Its subcellular location is the telomere. Its function is as follows. RNA chaperone that plays a key role in telomere maintenance and RNA localization to Cajal bodies. Specifically recognizes and binds the Cajal body box (CAB box) present in both small Cajal body RNAs (scaRNAs) and telomerase RNA template component (TERC). Essential component of the telomerase holoenzyme complex, a ribonucleoprotein complex essential for the replication of chromosome termini that elongates telomeres in most eukaryotes. In the telomerase holoenzyme complex, required to stimulate the catalytic activity of the complex. Acts by specifically binding the CAB box of the TERC RNA and controlling the folding of the CR4/CR5 region of the TERC RNA, a critical step for telomerase activity. In addition, also controls telomerase holoenzyme complex localization to Cajal body. During S phase, required for delivery of TERC to telomeres during S phase and for telomerase activity. In addition to its role in telomere maintenance, also required for Cajal body formation, probably by mediating localization of scaRNAs to Cajal bodies. Also plays a role in DNA repair: relocalizes to sites of DNA double-strand breaks in response to DNA damage and promotes the repair of DNA double-strand breaks. Acts by recruiting the ubiquitin ligase RNF8 to DNA breaks and promote both homologous recombination (HR) and non-homologous end joining (NHEJ). The protein is Telomerase Cajal body protein 1 of Mesocricetus auratus (Golden hamster).